Reading from the N-terminus, the 194-residue chain is UPF0215 protein DR_A0167 (194 aa).

The protein belongs to the UPF0215 family.

The protein is UPF0215 protein DR_A0167 of Deinococcus radiodurans (strain ATCC 13939 / DSM 20539 / JCM 16871 / CCUG 27074 / LMG 4051 / NBRC 15346 / NCIMB 9279 / VKM B-1422 / R1).